Here is a 1097-residue protein sequence, read N- to C-terminus: DNA-directed RNA polymerase subunit beta (1097 aa).

Residues 1072 to 1097 (QDVNPRRSTPSRPTYESLGVADYDED) are disordered.

The protein belongs to the RNA polymerase beta chain family. In cyanobacteria the RNAP catalytic core is composed of 2 alpha, 1 beta, 1 beta', 1 gamma and 1 omega subunit. When a sigma factor is associated with the core the holoenzyme is formed, which can initiate transcription.

It carries out the reaction RNA(n) + a ribonucleoside 5'-triphosphate = RNA(n+1) + diphosphate. Functionally, DNA-dependent RNA polymerase catalyzes the transcription of DNA into RNA using the four ribonucleoside triphosphates as substrates. This is DNA-directed RNA polymerase subunit beta from Parasynechococcus marenigrum (strain WH8102).